A 459-amino-acid polypeptide reads, in one-letter code: Serine protease HTRA3 (459 aa).

The first 23 residues, 1–23, serve as a signal peptide directing secretion; sequence MQARALLPATLATLATLAVSVLA. Positions 27 to 90 constitute an IGFBP N-terminal domain; sequence PAAPCPARCD…ECVRGVCRCR (64 aa). Disulfide bonds link cysteine 31–cysteine 54, cysteine 35–cysteine 56, cysteine 40–cysteine 57, cysteine 45–cysteine 60, cysteine 68–cysteine 82, cysteine 76–cysteine 87, cysteine 89–cysteine 107, and cysteine 96–cysteine 132. The region spanning 76 to 134 is the Kazal-like domain; that stretch reads CGDSLECVRGVCRCRWTHTVCGTDGHTYADVCALQAASRRALQISGTPVRQLQKGACPS. Residues 181–346 are serine protease; the sequence is GSGFIMSEAG…AIPSDRITRF (166 aa). Active-site charge relay system residues include histidine 197, aspartate 233, and serine 311. The 86-residue stretch at 365–450 folds into the PDZ domain; that stretch reads IRMRTITPSL…EVRRGNDDLL (86 aa).

Belongs to the peptidase S1C family. As to quaternary structure, homotrimer. Interacts with TGFB1; the interaction inhibits TGFB-mediated signaling. Interacts with BMP4; the interaction inhibits BMP4-mediated signaling. Interacts with TGFB2, GDF5 and MYH9. As to expression, expressed in the ovary, essentially in granulosa cells in a follicle-stage specific manner. Highest levels found in large luteinizing granulosa cells.

The protein localises to the secreted. Functionally, serine protease that cleaves beta-casein/CSN2 as well as several extracellular matrix (ECM) proteoglycans such as decorin/DCN, biglycan/BGN and fibronectin/FN1. Inhibits signaling mediated by TGF-beta family proteins possibly indirectly by degradation of these ECM proteoglycans. May act as a tumor suppressor. Negatively regulates, in vitro, trophoblast invasion during placental development and may be involved in the development of the placenta in vivo. May also have a role in ovarian development, granulosa cell differentiation and luteinization. The protein is Serine protease HTRA3 (Htra3) of Rattus norvegicus (Rat).